Consider the following 469-residue polypeptide: Probable Xaa-Pro aminopeptidase PEPP (469 aa).

Residues Asp-264, Asp-275, Glu-398, and Glu-438 each contribute to the Mn(2+) site.

This sequence belongs to the peptidase M24B family. It depends on Mn(2+) as a cofactor.

The enzyme catalyses Release of any N-terminal amino acid, including proline, that is linked to proline, even from a dipeptide or tripeptide.. Functionally, catalyzes the removal of a penultimate prolyl residue from the N-termini of peptides. This is Probable Xaa-Pro aminopeptidase PEPP (PEPP) from Ajellomyces capsulatus (strain H143) (Darling's disease fungus).